The primary structure comprises 859 residues: Cleavage factor two protein 2 (859 aa).

The segment at proline 560–arginine 611 is disordered. The segment covering asparagine 586 to glycine 597 has biased composition (acidic residues).

As to quaternary structure, component of the cleavage and polyadenylation factor (CPF) complex, which is composed of at least PTI1, SYC1, SSU72, GLC7, MPE1, REF2, PFS2, PTA1, YSH1/BRR5, SWD2, CFT2/YDH1, YTH1, CFT1/YHH1, FIP1 and PAP1. Interacts with the CTD domain of RPB1/RNA polymerase II; the interaction is enhanced upon phosphorylation of the RPB1 CTD domain. Interacts with PCF11.

It localises to the nucleus. Its function is as follows. RNA-binding component of the cleavage and polyadenylation factor (CPF) complex, which plays a key role in polyadenylation-dependent pre-mRNA 3'-end formation and cooperates with cleavage factors including the CFIA complex and NAB4/CFIB. May be involved in poly(A)-site recognition. May be involved in the association of the CPF, CPFIA and RNA polymerase II complexes. This chain is Cleavage factor two protein 2 (CFT2), found in Saccharomyces cerevisiae (strain ATCC 204508 / S288c) (Baker's yeast).